The primary structure comprises 61 residues: MATKAWVAKMAKPQKFAVRYHNRCQVCGRPRGYYRDFGLCRICLRKMAHQGLIPGVRKSSW.

Residues cysteine 24, cysteine 27, cysteine 40, and cysteine 43 each coordinate Zn(2+).

The protein belongs to the universal ribosomal protein uS14 family. Zinc-binding uS14 subfamily. As to quaternary structure, part of the 30S ribosomal subunit. Contacts proteins S3 and S10. Requires Zn(2+) as cofactor.

Functionally, binds 16S rRNA, required for the assembly of 30S particles and may also be responsible for determining the conformation of the 16S rRNA at the A site. The sequence is that of Small ribosomal subunit protein uS14 from Elusimicrobium minutum (strain Pei191).